The primary structure comprises 218 residues: Ras-related protein Rab-42 (218 aa).

GTP-binding residues include Ala-19, Gly-21, Lys-22, Thr-23, and Thr-46. Residues Thr-23, Thr-46, and Asp-70 each contribute to the Mg(2+) site. The GTP site is built by Gly-73, Lys-130, Asp-132, Val-160, and Lys-161. Residues Cys-216 and Cys-218 are each lipidated (S-geranylgeranyl cysteine).

It belongs to the small GTPase superfamily. Rab family. It depends on Mg(2+) as a cofactor.

Its subcellular location is the membrane. The catalysed reaction is GTP + H2O = GDP + phosphate + H(+). With respect to regulation, regulated by guanine nucleotide exchange factors (GEFs) which promote the exchange of bound GDP for free GTP. Regulated by GTPase activating proteins (GAPs) which increase the GTP hydrolysis activity. Inhibited by GDP dissociation inhibitors (GDIs). Functionally, the small GTPases Rab are key regulators of intracellular membrane trafficking, from the formation of transport vesicles to their fusion with membranes. Rabs cycle between an inactive GDP-bound form and an active GTP-bound form that is able to recruit to membranes different sets of downstream effectors directly responsible for vesicle formation, movement, tethering and fusion. The physiological function of RAB42 remains undefined. This chain is Ras-related protein Rab-42, found in Homo sapiens (Human).